A 1328-amino-acid chain; its full sequence is MIWYVATLIASVISTRGLVAQVAHGLREEPEFVTARAGEGVVLRCDVIHPVTGQPPPYVVEWFKFGVPIPIFIKFGYYPPHVDPEYAGRASLHDKASLRLEQVRSEDQGWYECKVLMLDQQYDTFHNGSWVHLTINAPPTFTETPPQYIEAKEGGSITMTCTAFGNPKPIVTWLKEGTLLSASGKYQVSDGSLTVTSVSREDRGAYTCRAYSIQGEAVHTTHLLVQGPPFIVSPPENITVNISQDALLTCRAEAYPGNLTYTWYWQDENVYFQNDLKLRVRILIDGTLIIFRVKPEDAGKYTCVPSNSLGRSPSASAYLTVQYPARVLNMPPVIYVPVGIHGYIRCPVDAEPPATVVKWNKDGRPLQVEKNLGWTLMEDGSIRIEEATEEALGTYTCVPYNTLGTMGQSAPARLVLKDPPYFTVLPGWEYRQEAGRELLIPCAAAGDPFPVITWRKVGKPSRSKHNALPSGSLQFRALSKEDHGEWECVATNVVTSITASTHLTVIGTSPHAPGSVRVHVSMTTANVSWEPGYDGGYEQTFSVWMKRAQFGPHDWLSLSVPLGPSWLLVDSLEPETAYQFSVLAQNRLGTSAFSEVVTVNTLAFPVTTPEPLVLVTPPRCLTANRTQQGVLLSWLPPANHSFPIDRYIMEFRVGERWEMLDDAIPGTDGEFFAKDLSQDTWYEFRVLAVMQDLISEPSNIAGVSSTDIFPQPDLTDDGLARPVLAGIVATICFLAAAILFSTLAACFVNKQRKRKLKRKKDPPLSITHCRKSLESPLSSGKVSPESIRTLRAPSESSDDQGQPAAKRMLSPTREKELSLYKKTKRAISSRKYSVAKAEAEAEATTPIELISRGPDGRFVMGPSEMEPSVKGRRIEGFPFAEETDMYPEFRQSDEENEDPLVPTSVAALKPQLTPMSSSQDSYLPPPAYSPRFQPRGLEGPSGLGGRLQATGQARPPAPRPFQHGQYYGYLSSSSPGEVEPPPFYMPEVGSPLSSVMSSPPLHTEGPFGHPTIPEENGENASNSTLPLTQTPTGGRSPEPWGRPEFPFGGLETPAMMFPHQLHPCDVAESLQPKPCLPRGLPPAPLQVPAAYPGMLSLEAPKGWVGKSPGRGPIPAPPATKWQERPMQPLVSQGQLRHTSQGMGIPVLPYPEPAEPGGHGGPSTFGLDTRWYEPQPRPRPSPRQARRAEPSLHQVVLQPSRLSPLTQSPLSSRTGSPELAARARPRPGLLQQAEMSEITLQPPAAVSFSRKSTPSSTGSPSQSSRSGSPSYRPTMGFTTLATGYPSPPPGPAPPAPGDNLDVFGQTPSPRRMGEEPLRPEPPTTLPTSG.

Residues 1-20 (MIWYVATLIASVISTRGLVA) form the signal peptide. Over 21 to 722 (QVAHGLREEP…DLTDDGLARP (702 aa)) the chain is Extracellular. 5 consecutive Ig-like domains span residues 30-115 (PEFV…ECKV), 139-226 (PTFT…LLVQ), 228-320 (PPFI…AYLT), 324-415 (PARV…ARLV), and 420-504 (PYFT…THLT). 2 disulfide bridges follow: Cys45-Cys113 and Cys161-Cys208. N-linked (GlcNAc...) asparagine glycosylation is found at Asn241 and Asn258. 3 cysteine pairs are disulfide-bonded: Cys250–Cys303, Cys346–Cys397, and Cys442–Cys488. Fibronectin type-III domains follow at residues 512–604 (APGS…TLAF) and 614–708 (LVTP…STDI). Asn624 is a glycosylation site (N-linked (GlcNAc...) asparagine). Residues 723–743 (VLAGIVATICFLAAAILFSTL) form a helical membrane-spanning segment. At 744–1328 (AACFVNKQRK…EPPTTLPTSG (585 aa)) the chain is on the cytoplasmic side. Disordered stretches follow at residues 758-817 (RKKD…EKEL), 914-1040 (PMSS…PEPW), and 1107-1328 (SPGR…PTSG). A phosphoserine mark is found at Ser775, Ser783, and Ser794. A compositionally biased stretch (low complexity) spans 990–1001 (SPLSSVMSSPPL). 3 stretches are compositionally biased toward polar residues: residues 1018–1033 (ENASNSTLPLTQTPTG), 1129–1141 (LVSQGQLRHTSQG), and 1199–1214 (SRLSPLTQSPLSSRTG). Arg1136 is subject to Omega-N-methylarginine. 2 positions are modified to phosphoserine: Ser1207 and Ser1215. The span at 1246-1273 (SFSRKSTPSSTGSPSQSSRSGSPSYRPT) shows a compositional bias: low complexity. 2 stretches are compositionally biased toward pro residues: residues 1284–1295 (PSPPPGPAPPAP) and 1318–1328 (PEPPTTLPTSG).

It belongs to the immunoglobulin superfamily. Turtle family. As to quaternary structure, found in a complex with MAGI2 and NLGN2, where it interacts with MAGI2 (via PDZ 5 and PDZ 6 domains). In terms of processing, N-glycosylated and sialylated. Not significantly O-glycosylated. As to expression, detected primarily in brain, including cortex, hippocampus, cerebellum and striatum. Largely restricted to inhibitory GABAergic interneurons (at protein level).

It localises to the postsynaptic cell membrane. Its subcellular location is the postsynaptic density. Its function is as follows. Transmembrane protein which is abundantly expressed in interneurons, where it may regulate inhibitory synapse development. May mediate homophilic cell adhesion. The sequence is that of Protein turtle homolog B from Rattus norvegicus (Rat).